A 349-amino-acid chain; its full sequence is D-alanine--D-alanine ligase (349 aa).

The 204-residue stretch at lysine 132 to aspartate 335 folds into the ATP-grasp domain. Residue valine 162–glutamate 217 participates in ATP binding. Mg(2+) contacts are provided by aspartate 289, glutamate 302, and asparagine 304.

This sequence belongs to the D-alanine--D-alanine ligase family. It depends on Mg(2+) as a cofactor. The cofactor is Mn(2+).

It is found in the cytoplasm. It catalyses the reaction 2 D-alanine + ATP = D-alanyl-D-alanine + ADP + phosphate + H(+). Its pathway is cell wall biogenesis; peptidoglycan biosynthesis. In terms of biological role, cell wall formation. The protein is D-alanine--D-alanine ligase of Lactococcus lactis subsp. cremoris (strain SK11).